Here is a 538-residue protein sequence, read N- to C-terminus: uncharacterized protein (538 aa).

The span at 1–13 (MYNNNSSTSSDSS) shows a compositional bias: low complexity. The segment at 1–43 (MYNNNSSTSSDSSNSEEKANAQHASSTDSTSEHTDPAVADEGF) is disordered. A run of 12 helical transmembrane segments spans residues 97–117 (ILHV…SSVF), 134–154 (VALL…ILWA), 163–183 (KIPL…VAVA), 194–214 (FFSG…FADM), 226–246 (IFAC…GFLA), 254–274 (WTEY…LFMK), 328–348 (PIVF…YLLL), 367–387 (ALPY…IAYF), 408–428 (LPPM…LAWS), 434–454 (VHWI…LTIF), 458–478 (LIYL…ANTI), and 504–524 (GSLL…FFIF).

This sequence belongs to the major facilitator superfamily. CAR1 family.

The protein resides in the endoplasmic reticulum. Its subcellular location is the membrane. This is an uncharacterized protein from Schizosaccharomyces pombe (strain 972 / ATCC 24843) (Fission yeast).